A 1423-amino-acid polypeptide reads, in one-letter code: Histone-lysine N-methyltransferase ATXR7 (1423 aa).

A GYF domain is found at 263–312; the sequence is HACWFLVDGEGRNHGPHSILELFSWQQHGYVSDAALIRDGENKLRPITLA. 3 disordered regions span residues 923 to 960, 1057 to 1097, and 1115 to 1158; these read CKDHEESLSNKPSQKVKKAHTSKLKRKNLSDARDEGTK, CSIS…SSTD, and LPCH…GRPK. The span at 936 to 949 shows a compositional bias: basic residues; that stretch reads QKVKKAHTSKLKRK. Basic and acidic residues predominate over residues 950–959; it reads NLSDARDEGT. The span at 1057–1071 shows a compositional bias: polar residues; sequence CSISQKGRKSSQSSI. 2 stretches are compositionally biased toward basic and acidic residues: residues 1115-1124 and 1140-1157; these read LPCHTSDKLQ and HTTERSPIKDLSVDDGRP. The 118-residue stretch at 1266 to 1383 folds into the SET domain; it reads KHLRFQQSKI…AGEEISYNYK (118 aa). Tyr1382 is an S-adenosyl-L-methionine binding site.

The protein belongs to the class V-like SAM-binding methyltransferase superfamily. Histone-lysine methyltransferase family. TRX/MLL subfamily. In terms of tissue distribution, expressed in the shoot and root apices, vascular tissues and mesophyll cells of rosette leaves.

Its subcellular location is the nucleus. It carries out the reaction L-lysyl(4)-[histone H3] + 3 S-adenosyl-L-methionine = N(6),N(6),N(6)-trimethyl-L-lysyl(4)-[histone H3] + 3 S-adenosyl-L-homocysteine + 3 H(+). It catalyses the reaction L-lysyl(36)-[histone H3] + 2 S-adenosyl-L-methionine = N(6),N(6)-dimethyl-L-lysyl(36)-[histone H3] + 2 S-adenosyl-L-homocysteine + 2 H(+). Functionally, histone methyltransferase involved in regulation of flowering time. Required for the expression of the flowering repressors FLC and MADS-box genes of the MAF family. Required for histone H3 dimethylation on 'Lys-36' H3K36me2 at the FLC locus. Required for histone H3 trimethylation on 'Lys-4' (H3K4me3) at the FLC locus. Prevents trimethylation on 'Lys-27' (H3K27me3) at the same locus. Involved in the control of seed dormancy and germination. The chain is Histone-lysine N-methyltransferase ATXR7 from Arabidopsis thaliana (Mouse-ear cress).